We begin with the raw amino-acid sequence, 94 residues long: Integration host factor subunit beta (94 aa).

It belongs to the bacterial histone-like protein family. Heterodimer of an alpha and a beta chain.

This protein is one of the two subunits of integration host factor, a specific DNA-binding protein that functions in genetic recombination as well as in transcriptional and translational control. The chain is Integration host factor subunit beta from Escherichia coli (strain UTI89 / UPEC).